The chain runs to 251 residues: Fibroblast growth factor-binding protein 1 (251 aa).

The N-terminal stretch at 1 to 20 is a signal peptide; the sequence is MRLHSLILLSFLLLATQAFS. The segment at 25-62 is disordered; it reads KRAKNAPHSTAEEGVEGSAPSLGKAQNKQRSRTSKSLT. 3 disulfide bridges follow: Cys74–Cys91, Cys100–Cys133, and Cys109–Cys145. Positions 160-189 are disordered; sequence NARGNTKPRKEKAEVSAREHNKVQEAVSTE. Over residues 170 to 182 the composition is skewed to basic and acidic residues; sequence EKAEVSAREHNKV. Residue Ser175 is glycosylated (O-linked (GalNAc...) serine). Residues 210 to 251 are sufficient for interaction with FGF2 and FGF2-induced effects; sequence RDPECLEDPDVLNQRKTALEFCGESWSSICTFFLNMLQATSC. Disulfide bonds link Cys214/Cys251 and Cys231/Cys239.

It belongs to the fibroblast growth factor-binding protein family. As to quaternary structure, found in a complex with FGFBP1, FGF1 and FGF2. Interacts with FGF1, FGF7, FGF10, FGF22 and HSPG2. Interacts with FGF2. In terms of tissue distribution, expressed in intestine, ovary, lung, placenta and normal and wounded skin.

The protein localises to the secreted. The protein resides in the extracellular space. It localises to the cell membrane. In terms of biological role, acts as a carrier protein that releases fibroblast-binding factors (FGFs) from the extracellular matrix (EM) storage and thus enhances the mitogenic activity of FGFs. Enhances FGF2 signaling during tissue repair, angiogenesis and in tumor growth. In Mus musculus (Mouse), this protein is Fibroblast growth factor-binding protein 1 (Fgfbp1).